Here is a 162-residue protein sequence, read N- to C-terminus: Probable ergosterol biosynthetic protein 28 homolog (162 aa).

4 helical membrane-spanning segments follow: residues 7-25 (AWMS…MCYA), 40-60 (LSRA…VLIF), 69-89 (IAHI…VFFY), and 96-116 (IVTV…LTFL).

This sequence belongs to the ERG28 family. In terms of tissue distribution, expressed in tissues including muscles, intestine and neurons.

It localises to the endoplasmic reticulum membrane. The protein resides in the cell projection. It is found in the dendrite. In terms of biological role, promotes the translocation of slo-1 potassium ion channels from the endoplasmic reticulum to its final destination at the plasma membrane, probably by shielding from premature proteasomal degradation in the endoplasmic reticulum. Maintains the levels of slo-1 potassium ion channel at the presynaptic neurons. The polypeptide is Probable ergosterol biosynthetic protein 28 homolog (Caenorhabditis elegans).